Reading from the N-terminus, the 325-residue chain is Protease HtpX homolog (325 aa).

Residues 20-40 (IGYLLGGGGGMMIALVIAVAM) form a helical membrane-spanning segment. Position 130 (His130) interacts with Zn(2+). Residue Glu131 is part of the active site. Residue His134 coordinates Zn(2+). 2 helical membrane passes run 145-165 (IVAT…FLGG) and 173-193 (VMGV…AMIV). Zn(2+) is bound at residue Glu202. Positions 286–325 (SAAMTARAAAPSQNSGPWGQRSDNAGGNSNGGSRYRGPWS) are disordered. Residues 306–325 (RSDNAGGNSNGGSRYRGPWS) are compositionally biased toward low complexity.

This sequence belongs to the peptidase M48B family. Zn(2+) is required as a cofactor.

It is found in the cell inner membrane. The polypeptide is Protease HtpX homolog (Brucella melitensis biotype 2 (strain ATCC 23457)).